The sequence spans 188 residues: Elongation factor P-like protein (188 aa).

Belongs to the elongation factor P family.

The sequence is that of Elongation factor P-like protein from Marinobacter nauticus (strain ATCC 700491 / DSM 11845 / VT8) (Marinobacter aquaeolei).